Consider the following 1053-residue polypeptide: Serine/threonine-protein phosphatase 6 regulatory ankyrin repeat subunit A (1053 aa).

27 ANK repeats span residues 40 to 69, 73 to 102, 106 to 135, 139 to 168, 172 to 201, 205 to 234, 238 to 267, 271 to 301, 305 to 334, 338 to 367, 371 to 400, 404 to 433, 437 to 466, 470 to 500, 504 to 534, 549 to 578, 582 to 611, 616 to 645, 652 to 681, 685 to 714, 718 to 747, 755 to 786, 788 to 817, 822 to 851, 855 to 885, 889 to 918, and 925 to 954; these read EKRT…RVNA, KWLT…DVNA, NWQT…NVNV, AGRT…NINA, KDRR…EVTC, KSYT…DMNE, YGNT…NVNQ, KGFT…DVNM, DGKT…VIDC, NGNT…DTAK, HGMF…DIDT, FGRT…DFNK, FGRS…SVND, RGCT…NPGI, QGYN…DVLM, ATIS…DLDV, SGRT…SILV, LKRT…PQNA, NGQT…NVDA, WGRT…KCLL, RGRT…SVDA, HGYT…KIDG, AFSP…SIVN, KGRT…QVNS, TGKT…DLTL, SKNT…DRNL, and ALQT…SVLA. 2 positions are modified to phosphoserine: S1007 and S1011.

In terms of assembly, protein phosphatase 6 (PP6) holoenzyme is proposed to be a heterotrimeric complex formed by the catalytic subunit, a SAPS domain-containing subunit (PP6R) and an ankyrin repeat-domain containing regulatory subunit (ARS). Interacts with PPP1C and HNRPK. Interacts with PPP6C, PPP6R1 and PPP6R3. Ubiquitinated by the ECS(RAB40C) complex leading to its degradation and decreased PP6 activity. Widely expressed (at protein level).

The protein resides in the nucleus. It is found in the nucleoplasm. It localises to the cytoplasm. Its subcellular location is the cytosol. The protein localises to the cell projection. The protein resides in the lamellipodium. Putative regulatory subunit of protein phosphatase 6 (PP6) that may be involved in the recognition of phosphoprotein substrates. Involved in the PP6-mediated dephosphorylation of NFKBIE opposing its degradation in response to TNF-alpha. Selectively inhibits the phosphatase activity of PPP1C. Targets PPP1C to modulate HNRPK phosphorylation. Involved in the PP6-mediated dephosphorylation of MOB1 and induced focal adhesion assembly during cell migration. The protein is Serine/threonine-protein phosphatase 6 regulatory ankyrin repeat subunit A (Ankrd28) of Mus musculus (Mouse).